A 258-amino-acid chain; its full sequence is Probable phthiotriol/phenolphthiotriol dimycocerosates methyltransferase 2 (258 aa).

The protein belongs to the methyltransferase superfamily. Phthiotriol/phenolphthiotriol dimycocerosates methyltransferase family.

Its function is as follows. Catalyzes the methylation of the lipid moiety of the intermediate compounds phthiotriol and glycosylated phenolphthiotriol dimycoserosates to form phthiocerol dimycocerosates (DIM A) and glycosylated phenolphthiocerol dimycocerosates (PGL). The polypeptide is Probable phthiotriol/phenolphthiotriol dimycocerosates methyltransferase 2 (Mycobacterium ulcerans (strain Agy99)).